A 226-amino-acid polypeptide reads, in one-letter code: Gap junction beta-2 protein (226 aa).

An intramembrane segment occupies 2 to 13 (DWGALQTILGGV). Topologically, residues 14–20 (NKHSTSI) are cytoplasmic. A helical transmembrane segment spans residues 21–40 (GKIWLTVLFIFRIMILVVAA). The Extracellular portion of the chain corresponds to 41–73 (KEVWGDEQADFVCNTLQPGCKNVCYDHYFPISH). Ca(2+) contacts are provided by glutamate 42, glycine 45, and glutamate 47. Disulfide bonds link cysteine 53/cysteine 180, cysteine 60/cysteine 174, and cysteine 64/cysteine 169. Residues 74–94 (IRLWALQLIFVSTPALLVAMH) form a helical membrane-spanning segment. Topologically, residues 95 to 135 (VAYRRHEKKRKFIKGEIKSEFKDIEEIKTQKVRIEGSLWWT) are cytoplasmic. The chain crosses the membrane as a helical span at residues 136 to 156 (YTSSIFFRVIFEAAFMYVFYV). The Extracellular portion of the chain corresponds to 157–189 (MYDGFSMQRLVKCNAWPCPNTVDCFVSRPTEKT). Residues 190–210 (VFTVFMIAVSGICILLNVTEL) form a helical membrane-spanning segment. Topologically, residues 211-226 (CYLLIRYCSGRSKKPV) are cytoplasmic.

Belongs to the connexin family. Beta-type (group I) subfamily. A hemichannel or connexon is composed of a hexamer of connexins. A functional gap junction is formed by the apposition of two hemichannels. Forms heteromeric channels with GJB4. Interacts with CNST.

The protein localises to the cell membrane. It is found in the cell junction. It localises to the gap junction. Its function is as follows. Structural component of gap junctions. Gap junctions are dodecameric channels that connect the cytoplasm of adjoining cells. They are formed by the docking of two hexameric hemichannels, one from each cell membrane. Small molecules and ions diffuse from one cell to a neighboring cell via the central pore. This chain is Gap junction beta-2 protein (GJB2), found in Pongo pygmaeus (Bornean orangutan).